Here is a 558-residue protein sequence, read N- to C-terminus: Dihydroxy-acid dehydratase (558 aa).

Asp-78 is a Mg(2+) binding site. A [2Fe-2S] cluster-binding site is contributed by Cys-119. 2 residues coordinate Mg(2+): Asp-120 and Lys-121. Lys-121 carries the post-translational modification N6-carboxylysine. Position 192 (Cys-192) interacts with [2Fe-2S] cluster. Residue Glu-446 participates in Mg(2+) binding. Ser-472 acts as the Proton acceptor in catalysis.

The protein belongs to the IlvD/Edd family. As to quaternary structure, homodimer. Requires [2Fe-2S] cluster as cofactor. Mg(2+) is required as a cofactor.

It catalyses the reaction (2R)-2,3-dihydroxy-3-methylbutanoate = 3-methyl-2-oxobutanoate + H2O. It carries out the reaction (2R,3R)-2,3-dihydroxy-3-methylpentanoate = (S)-3-methyl-2-oxopentanoate + H2O. The protein operates within amino-acid biosynthesis; L-isoleucine biosynthesis; L-isoleucine from 2-oxobutanoate: step 3/4. It functions in the pathway amino-acid biosynthesis; L-valine biosynthesis; L-valine from pyruvate: step 3/4. Functionally, functions in the biosynthesis of branched-chain amino acids. Catalyzes the dehydration of (2R,3R)-2,3-dihydroxy-3-methylpentanoate (2,3-dihydroxy-3-methylvalerate) into 2-oxo-3-methylpentanoate (2-oxo-3-methylvalerate) and of (2R)-2,3-dihydroxy-3-methylbutanoate (2,3-dihydroxyisovalerate) into 2-oxo-3-methylbutanoate (2-oxoisovalerate), the penultimate precursor to L-isoleucine and L-valine, respectively. This is Dihydroxy-acid dehydratase from Campylobacter jejuni subsp. jejuni serotype O:23/36 (strain 81-176).